Consider the following 83-residue polypeptide: Exodeoxyribonuclease 7 small subunit (83 aa).

The protein belongs to the XseB family. Heterooligomer composed of large and small subunits.

It localises to the cytoplasm. It carries out the reaction Exonucleolytic cleavage in either 5'- to 3'- or 3'- to 5'-direction to yield nucleoside 5'-phosphates.. Bidirectionally degrades single-stranded DNA into large acid-insoluble oligonucleotides, which are then degraded further into small acid-soluble oligonucleotides. The protein is Exodeoxyribonuclease 7 small subunit of Bradyrhizobium sp. (strain BTAi1 / ATCC BAA-1182).